The chain runs to 81 residues: Cell division protein ZapB (81 aa).

Residues 5-81 are a coiled coil; sequence LEVFEKLESK…QALLGRMEEV (77 aa). Residues 43-64 are disordered; sequence VQSAQHGREELERENSQLKEQQ. Residues 48–59 are compositionally biased toward basic and acidic residues; it reads HGREELERENSQ.

The protein belongs to the ZapB family. Homodimer. The ends of the coiled-coil dimer bind to each other, forming polymers. Interacts with FtsZ.

Its subcellular location is the cytoplasm. Non-essential, abundant cell division factor that is required for proper Z-ring formation. It is recruited early to the divisome by direct interaction with FtsZ, stimulating Z-ring assembly and thereby promoting cell division earlier in the cell cycle. Its recruitment to the Z-ring requires functional FtsA or ZipA. The sequence is that of Cell division protein ZapB from Klebsiella pneumoniae subsp. pneumoniae (strain ATCC 700721 / MGH 78578).